Reading from the N-terminus, the 107-residue chain is UPF0060 membrane protein mll7841 (107 aa).

The next 4 helical transmembrane spans lie at 4–24, 30–50, 60–80, and 87–107; these read LFYTAAALAEIAGCFSVWAWW, PLWLAPGFVSLLLFAWLLALV, AAYGGIYIAASLAWLWLVEGV, and LAGAALCIAGASLILLAPRGA.

The protein belongs to the UPF0060 family.

It is found in the cell inner membrane. This Mesorhizobium japonicum (strain LMG 29417 / CECT 9101 / MAFF 303099) (Mesorhizobium loti (strain MAFF 303099)) protein is UPF0060 membrane protein mll7841.